A 266-amino-acid chain; its full sequence is Thymidylate synthase (266 aa).

R24 contacts dUMP. Position 54 (H54) interacts with (6R)-5,10-methylene-5,6,7,8-tetrahydrofolate. 129-130 is a dUMP binding site; that stretch reads RR. The active-site Nucleophile is C149. DUMP-binding positions include 169–172, N180, and 210–212; these read RSAD and HIY. Residue D172 participates in (6R)-5,10-methylene-5,6,7,8-tetrahydrofolate binding. A265 is a (6R)-5,10-methylene-5,6,7,8-tetrahydrofolate binding site.

The protein belongs to the thymidylate synthase family. Bacterial-type ThyA subfamily. As to quaternary structure, homodimer.

The protein resides in the cytoplasm. The catalysed reaction is dUMP + (6R)-5,10-methylene-5,6,7,8-tetrahydrofolate = 7,8-dihydrofolate + dTMP. It functions in the pathway pyrimidine metabolism; dTTP biosynthesis. Its function is as follows. Catalyzes the reductive methylation of 2'-deoxyuridine-5'-monophosphate (dUMP) to 2'-deoxythymidine-5'-monophosphate (dTMP) while utilizing 5,10-methylenetetrahydrofolate (mTHF) as the methyl donor and reductant in the reaction, yielding dihydrofolate (DHF) as a by-product. This enzymatic reaction provides an intracellular de novo source of dTMP, an essential precursor for DNA biosynthesis. The polypeptide is Thymidylate synthase (Mycobacterium leprae (strain TN)).